The following is a 66-amino-acid chain: Large ribosomal subunit protein bL33c (66 aa).

It belongs to the bacterial ribosomal protein bL33 family.

It localises to the plastid. It is found in the chloroplast. This Solanum bulbocastanum (Wild potato) protein is Large ribosomal subunit protein bL33c.